Reading from the N-terminus, the 465-residue chain is Hydroxyacid-oxoacid transhydrogenase, mitochondrial (465 aa).

Residue Lys-443 is modified to N6-acetyllysine. Ser-450 is modified (phosphoserine).

Belongs to the iron-containing alcohol dehydrogenase family. Hydroxyacid-oxoacid transhydrogenase subfamily. Expressed in white and brown adipose tissues, liver, and kidney. Expression is differentiation-dependent during in vitro brown and white adipogenesis.

The protein localises to the mitochondrion. The enzyme catalyses (S)-3-hydroxybutanoate + 2-oxoglutarate = (R)-2-hydroxyglutarate + acetoacetate. The catalysed reaction is 4-hydroxybutanoate + 2-oxoglutarate = (R)-2-hydroxyglutarate + succinate semialdehyde. Its function is as follows. Catalyzes the cofactor-independent reversible oxidation of gamma-hydroxybutyrate (GHB) to succinic semialdehyde (SSA) coupled to reduction of 2-ketoglutarate (2-KG) to D-2-hydroxyglutarate (D-2-HG). L-3-hydroxybutyrate (L-3-OHB) is also a substrate for HOT when using 2-KG as hydrogen acceptor, resulting in the formation of D-2-HG. This is Hydroxyacid-oxoacid transhydrogenase, mitochondrial (Adhfe1) from Mus musculus (Mouse).